The chain runs to 293 residues: Proline iminopeptidase (293 aa).

Residues 28-277 (PLVLLHGGPG…NCGHMSFVEK (250 aa)) form the AB hydrolase-1 domain. The Nucleophile role is filled by Ser105. The active site involves Asp244. His271 functions as the Proton donor in the catalytic mechanism.

The protein belongs to the peptidase S33 family.

The protein localises to the cell envelope. It carries out the reaction Release of N-terminal proline from a peptide.. Releases the N-terminal proline from various substrates. In Lactobacillus crispatus (strain ST1), this protein is Proline iminopeptidase.